The primary structure comprises 257 residues: NAD-capped RNA hydrolase NudC (257 aa).

R69 lines the substrate pocket. Residues C98 and C101 each coordinate Zn(2+). Substrate is bound at residue E111. Residues C116 and C119 each coordinate Zn(2+). Substrate is bound at residue Y124. Residues 125-248 enclose the Nudix hydrolase domain; that stretch reads PQIAPCIIVA…TVARRLIEDT (124 aa). Residues A158, E174, and E178 each contribute to the a divalent metal cation site. A Nudix box motif is present at residues 159–180; the sequence is GFVEVGETLEQAVAREVMEESG. 192–199 lines the substrate pocket; sequence QPWPFPQS. E219 contributes to the a divalent metal cation binding site. A241 provides a ligand contact to substrate.

The protein belongs to the Nudix hydrolase family. NudC subfamily. In terms of assembly, homodimer. Mg(2+) serves as cofactor. The cofactor is Mn(2+). It depends on Zn(2+) as a cofactor.

It catalyses the reaction a 5'-end NAD(+)-phospho-ribonucleoside in mRNA + H2O = a 5'-end phospho-adenosine-phospho-ribonucleoside in mRNA + beta-nicotinamide D-ribonucleotide + 2 H(+). The enzyme catalyses NAD(+) + H2O = beta-nicotinamide D-ribonucleotide + AMP + 2 H(+). It carries out the reaction NADH + H2O = reduced beta-nicotinamide D-ribonucleotide + AMP + 2 H(+). MRNA decapping enzyme that specifically removes the nicotinamide adenine dinucleotide (NAD) cap from a subset of mRNAs by hydrolyzing the diphosphate linkage to produce nicotinamide mononucleotide (NMN) and 5' monophosphate mRNA. The NAD-cap is present at the 5'-end of some mRNAs and stabilizes RNA against 5'-processing. Has preference for mRNAs with a 5'-end purine. Catalyzes the hydrolysis of a broad range of dinucleotide pyrophosphates. This is NAD-capped RNA hydrolase NudC from Salmonella heidelberg (strain SL476).